We begin with the raw amino-acid sequence, 512 residues long: Probable DNA ligase (512 aa).

Residue Glu208 participates in ATP binding. Lys210 functions as the N6-AMP-lysine intermediate in the catalytic mechanism. Residues Arg215, Arg230, Glu259, Phe299, Arg374, and Lys380 each coordinate ATP.

The protein belongs to the ATP-dependent DNA ligase family. It depends on Mg(2+) as a cofactor.

It catalyses the reaction ATP + (deoxyribonucleotide)n-3'-hydroxyl + 5'-phospho-(deoxyribonucleotide)m = (deoxyribonucleotide)n+m + AMP + diphosphate.. DNA ligase that seals nicks in double-stranded DNA during DNA replication, DNA recombination and DNA repair. The polypeptide is Probable DNA ligase (Streptomyces coelicolor (strain ATCC BAA-471 / A3(2) / M145)).